Here is a 621-residue protein sequence, read N- to C-terminus: tRNA uridine 5-carboxymethylaminomethyl modification enzyme MnmG (621 aa).

Position 11–16 (11–16 (GAGHAG)) interacts with FAD. 271–285 (GPRYCPSVEDKINRF) lines the NAD(+) pocket.

It belongs to the MnmG family. As to quaternary structure, homodimer. Heterotetramer of two MnmE and two MnmG subunits. FAD is required as a cofactor.

The protein localises to the cytoplasm. NAD-binding protein involved in the addition of a carboxymethylaminomethyl (cmnm) group at the wobble position (U34) of certain tRNAs, forming tRNA-cmnm(5)s(2)U34. The sequence is that of tRNA uridine 5-carboxymethylaminomethyl modification enzyme MnmG from Cytophaga hutchinsonii (strain ATCC 33406 / DSM 1761 / CIP 103989 / NBRC 15051 / NCIMB 9469 / D465).